The chain runs to 212 residues: Methylthioribulose-1-phosphate dehydratase (212 aa).

His99 and His101 together coordinate Zn(2+).

It belongs to the aldolase class II family. MtnB subfamily. Homotetramer. It depends on Zn(2+) as a cofactor.

The enzyme catalyses 5-(methylsulfanyl)-D-ribulose 1-phosphate = 5-methylsulfanyl-2,3-dioxopentyl phosphate + H2O. Its pathway is amino-acid biosynthesis; L-methionine biosynthesis via salvage pathway; L-methionine from S-methyl-5-thio-alpha-D-ribose 1-phosphate: step 2/6. Its function is as follows. Catalyzes the dehydration of methylthioribulose-1-phosphate (MTRu-1-P) into 2,3-diketo-5-methylthiopentyl-1-phosphate (DK-MTP-1-P). The chain is Methylthioribulose-1-phosphate dehydratase from Bacillus pumilus (strain SAFR-032).